A 264-amino-acid polypeptide reads, in one-letter code: Acyl-[acyl-carrier-protein]--UDP-N-acetylglucosamine O-acyltransferase (264 aa).

The protein belongs to the transferase hexapeptide repeat family. LpxA subfamily. As to quaternary structure, homotrimer.

The protein resides in the cytoplasm. The catalysed reaction is a (3R)-hydroxyacyl-[ACP] + UDP-N-acetyl-alpha-D-glucosamine = a UDP-3-O-[(3R)-3-hydroxyacyl]-N-acetyl-alpha-D-glucosamine + holo-[ACP]. Its pathway is glycolipid biosynthesis; lipid IV(A) biosynthesis; lipid IV(A) from (3R)-3-hydroxytetradecanoyl-[acyl-carrier-protein] and UDP-N-acetyl-alpha-D-glucosamine: step 1/6. Functionally, involved in the biosynthesis of lipid A, a phosphorylated glycolipid that anchors the lipopolysaccharide to the outer membrane of the cell. This is Acyl-[acyl-carrier-protein]--UDP-N-acetylglucosamine O-acyltransferase from Rickettsia canadensis (strain McKiel).